The chain runs to 154 residues: Endoribonuclease YbeY (154 aa).

Residues H113, H117, and H123 each contribute to the Zn(2+) site.

It belongs to the endoribonuclease YbeY family. Zn(2+) is required as a cofactor.

It is found in the cytoplasm. Its function is as follows. Single strand-specific metallo-endoribonuclease involved in late-stage 70S ribosome quality control and in maturation of the 3' terminus of the 16S rRNA. This chain is Endoribonuclease YbeY, found in Ehrlichia chaffeensis (strain ATCC CRL-10679 / Arkansas).